The primary structure comprises 464 residues: Siroheme synthase (464 aa).

The interval 1-203 (MEFLPLFHNL…GQGAEAERLL (203 aa)) is precorrin-2 dehydrogenase /sirohydrochlorin ferrochelatase. NAD(+) is bound by residues 22 to 23 (EI) and 43 to 44 (PE). Residue S128 is modified to Phosphoserine. Residues 216–464 (GEVYLVGAGP…AWFEGAQATL (249 aa)) are uroporphyrinogen-III C-methyltransferase. Residue P225 participates in S-adenosyl-L-methionine binding. The active-site Proton acceptor is the D248. K270 serves as the catalytic Proton donor. S-adenosyl-L-methionine contacts are provided by residues 301-303 (GGD), I306, 331-332 (TA), M383, and G412.

This sequence in the N-terminal section; belongs to the precorrin-2 dehydrogenase / sirohydrochlorin ferrochelatase family. The protein in the C-terminal section; belongs to the precorrin methyltransferase family.

It catalyses the reaction uroporphyrinogen III + 2 S-adenosyl-L-methionine = precorrin-2 + 2 S-adenosyl-L-homocysteine + H(+). It carries out the reaction precorrin-2 + NAD(+) = sirohydrochlorin + NADH + 2 H(+). The catalysed reaction is siroheme + 2 H(+) = sirohydrochlorin + Fe(2+). The protein operates within cofactor biosynthesis; adenosylcobalamin biosynthesis; precorrin-2 from uroporphyrinogen III: step 1/1. It functions in the pathway cofactor biosynthesis; adenosylcobalamin biosynthesis; sirohydrochlorin from precorrin-2: step 1/1. It participates in porphyrin-containing compound metabolism; siroheme biosynthesis; precorrin-2 from uroporphyrinogen III: step 1/1. Its pathway is porphyrin-containing compound metabolism; siroheme biosynthesis; siroheme from sirohydrochlorin: step 1/1. The protein operates within porphyrin-containing compound metabolism; siroheme biosynthesis; sirohydrochlorin from precorrin-2: step 1/1. Its function is as follows. Multifunctional enzyme that catalyzes the SAM-dependent methylations of uroporphyrinogen III at position C-2 and C-7 to form precorrin-2 via precorrin-1. Then it catalyzes the NAD-dependent ring dehydrogenation of precorrin-2 to yield sirohydrochlorin. Finally, it catalyzes the ferrochelation of sirohydrochlorin to yield siroheme. This is Siroheme synthase from Pseudomonas syringae pv. tomato (strain ATCC BAA-871 / DC3000).